The sequence spans 1141 residues: MAVRGEAAQDWAKPGLRGPSPAPVARGDHRCRGGSPSSPRGSGCCWRALALQPLRRSPQLSSALCAGSLSVLLALLVRLVGGEVGGELESSQEAAAEEEEEEGARGGVFPGPRGGAPGGGAQLSPWLQPAALLFSLLCAFFWMGLCLLRAGVRLPLAVALLAACCAGEALVQLSLGVGDGRLLSLPAAGVLLSCLGGATWLVLRLRLGVLMVALTSALRTVALVSLERFKVAWRPYLAYLAAVLGLLLARYAEQLLPQCSGPAPPRERFGSQSSARTKEEIPGWKRRRRSSSVVAGEMSGCGGKSHRRTSLPCIPREQLMGHSEWDHKRGSRGSQSGTSVTVDIAVMGEAHGLITDLLADPSLPPNVCTSLRAVSNLLSTQLTFQAIHKPRVNPTVTFSENYTCSDSEEGLEKDKLAIPKRLRRSLPPGLLRRVSSTWTTTTSATGLPTLEPAPVRRDRSASIKPHEAPSPSAVNPDSWNAPVLMTLTKSRSFTSSYAVSAANHVKAKKQNRPGGLDKISPVPSPSSSPPQGSPTSSPVSGIASVQFPESPEVTTKRGPGSHRALTYTQSAPDLSPQIPPSPVICSSCGRPYSQGNPADGPSERSGPAMQKPNRTDDTSQVTSDYETNNNSDSSDILQNDEEAECQREPLRKASACGTYTPQTMIFLDKPILAPEPLVMDNLDSIMDQLNTWNFPIFDLVENIGRKCGRILSQVSYRLFEDMGLFEAFKIPVREFMNYFHALEIGYRDIPYHNRIHATDVLHAVWYLTTQPIPGLPSVIGDHGSASDSDSDSGFTHGHMGYVFSKAYHVPDDKYGCLSGNIPALELMALYVAAAMHDYDHPGRTNAFLVATSAPQAVLYNDRSVLENHHAAAAWNLFMSRPEYNFLVNLDHVEFKHFRFLVIEAILATDLKKHFDFVAKFNAKVNDDVGIDWTNENDRLLVCQMCIKLADINGPAKCKDLHLRWTEGIASEFYEQGDEEASLGLPISPFMDRSAPQLANLQESFISHIVGPLCHSYDSAGLMPGKWVDDSDDSGDTDDPEEEEEEAETPHEEETCENSEAPRKKSFKRRRIYCQITQHLLQNHMMWKKVIEEEQCLSGTENQAPDQAPLQHSSEQIQAIKEEEEEKGKPRAEETLAPQPDL.

The interval Met-1–Gly-41 is disordered. A helical transmembrane segment spans residues Ser-62–Gly-82. The interval Glu-89–Gly-111 is disordered. Transmembrane regions (helical) follow at residues Leu-127 to Leu-147, Ala-157 to Val-177, Leu-182 to Val-202, Leu-207 to Glu-227, and Phe-229 to Ala-249. The interval Pro-262–Thr-309 is disordered. Ser-310 carries the post-translational modification Phosphoserine. A compositionally biased stretch (low complexity) spans Arg-433–Thr-445. The interval Arg-433–Trp-479 is disordered. Over residues Pro-454–Glu-467 the composition is skewed to basic and acidic residues. Residues Ser-492, Ser-520, Ser-524, and Ser-533 each carry the phosphoserine modification. A disordered region spans residues His-504 to Ala-643. The span at Val-522–Gly-532 shows a compositional bias: pro residues. Residues Thr-618–Leu-637 show a composition bias toward polar residues. The interaction with SLFN12 stretch occupies residues Lys-669–Leu-1141. Residues Pro-674–Glu-1093 form the PDEase domain. Residue His-752 is the Proton donor of the active site. His-752 lines the AMP pocket. Mn(2+) contacts are provided by His-756, His-836, Asp-837, and Asp-950. AMP is bound by residues Asp-837, Asp-950, and Gln-1001. Asp-837 contacts Mg(2+). Disordered regions lie at residues Gly-1024 to Arg-1062 and Gly-1098 to Leu-1141. Positions Asp-1029–Ala-1046 are enriched in acidic residues. Phosphoserine is present on Ser-1033. Thr-1036 is subject to Phosphothreonine. The span at Gly-1098–Ser-1113 shows a compositional bias: polar residues. Lys-1120 is covalently cross-linked (Glycyl lysine isopeptide (Lys-Gly) (interchain with G-Cter in SUMO2)).

It belongs to the cyclic nucleotide phosphodiesterase family. PDE3 subfamily. As to quaternary structure, homodimer. Interacts with PDE3A; direct low affinity interaction which is stimulated by binding of 17beta-estradiol/E2 to PDE3A and that positively regulates the ribonuclease activity of SLFN12. Mn(2+) serves as cofactor. The cofactor is Mg(2+).

It is found in the membrane. The protein resides in the cytoplasm. It localises to the cytosol. It carries out the reaction a nucleoside 3',5'-cyclic phosphate + H2O = a nucleoside 5'-phosphate + H(+). The catalysed reaction is 3',5'-cyclic AMP + H2O = AMP + H(+). It catalyses the reaction 3',5'-cyclic GMP + H2O = GMP + H(+). The enzyme catalyses 3',5'-cyclic UMP + H2O = UMP + H(+). Cyclic nucleotide phosphodiesterase with specificity for the second messengers cAMP and cGMP, which are key regulators of many important physiological processes. Also has activity toward cUMP. Independently of its catalytic activity it is part of an E2/17beta-estradiol-induced pro-apoptotic signaling pathway. E2 stabilizes the PDE3A/SLFN12 complex in the cytosol, promoting the dephosphorylation of SLFN12 and activating its pro-apoptotic ribosomal RNA/rRNA ribonuclease activity. This apoptotic pathway might be relevant in tissues with high concentration of E2 and be for instance involved in placenta remodeling. The chain is cGMP-inhibited 3',5'-cyclic phosphodiesterase 3A from Rattus norvegicus (Rat).